The primary structure comprises 153 residues: Histone H2B.3 (153 aa).

Residues 1-28 (MAPKADKKPAAKKPAEEEPATEKAEKAP) are compositionally biased toward basic and acidic residues. Residues 1 to 60 (MAPKADKKPAAKKPAEEEPATEKAEKAPAGKKPKAEKRLPAGKSAGKEGGEGKKGKKKAK) are disordered. An N6-acetyllysine mark is found at Lys-7 and Lys-37. Lys-149 is covalently cross-linked (Glycyl lysine isopeptide (Lys-Gly) (interchain with G-Cter in ubiquitin)).

The protein belongs to the histone H2B family. The nucleosome is a histone octamer containing two molecules each of H2A, H2B, H3 and H4 assembled in one H3-H4 heterotetramer and two H2A-H2B heterodimers. The octamer wraps approximately 147 bp of DNA. In terms of processing, can be acetylated to form H2BK6ac and H2BK33ac. Post-translationally, monoubiquitinated to form H2BK143ub1; may give a specific tag for epigenetic transcriptional activation.

It is found in the nucleus. The protein localises to the chromosome. In terms of biological role, core component of nucleosome. Nucleosomes wrap and compact DNA into chromatin, limiting DNA accessibility to the cellular machineries which require DNA as a template. Histones thereby play a central role in transcription regulation, DNA repair, DNA replication and chromosomal stability. DNA accessibility is regulated via a complex set of post-translational modifications of histones, also called histone code, and nucleosome remodeling. The protein is Histone H2B.3 of Zea mays (Maize).